A 328-amino-acid chain; its full sequence is Sulfate adenylyltransferase subunit 2 (328 aa).

Disordered regions lie at residues 15 to 34 (AAPD…PSSH) and 304 to 328 (SERE…EGYF).

This sequence belongs to the PAPS reductase family. CysD subfamily. As to quaternary structure, heterodimer composed of CysD, the smaller subunit, and CysN.

It catalyses the reaction sulfate + ATP + H(+) = adenosine 5'-phosphosulfate + diphosphate. It functions in the pathway sulfur metabolism; hydrogen sulfide biosynthesis; sulfite from sulfate: step 1/3. With CysN forms the ATP sulfurylase (ATPS) that catalyzes the adenylation of sulfate producing adenosine 5'-phosphosulfate (APS) and diphosphate, the first enzymatic step in sulfur assimilation pathway. APS synthesis involves the formation of a high-energy phosphoric-sulfuric acid anhydride bond driven by GTP hydrolysis by CysN coupled to ATP hydrolysis by CysD. In Rhodopseudomonas palustris (strain BisA53), this protein is Sulfate adenylyltransferase subunit 2.